A 213-amino-acid polypeptide reads, in one-letter code: Probable GTP-binding protein EngB (213 aa).

Residues 30 to 204 enclose the EngB-type G domain; sequence SVQSIAFMGR…REFILETLGI (175 aa). Residues 38-45, 65-69, 83-86, 150-153, and 183-185 each bind GTP; these read GRSNSGKS, GKTKL, DLPG, TKID, and ISA. Residues Ser45 and Thr67 each coordinate Mg(2+).

The protein belongs to the TRAFAC class TrmE-Era-EngA-EngB-Septin-like GTPase superfamily. EngB GTPase family. The cofactor is Mg(2+).

Necessary for normal cell division and for the maintenance of normal septation. This is Probable GTP-binding protein EngB from Leptospira biflexa serovar Patoc (strain Patoc 1 / Ames).